The sequence spans 338 residues: DNA-directed RNA polymerase subunit alpha (338 aa).

An alpha N-terminal domain (alpha-NTD) region spans residues 1-234 (MIHKNWAELI…DQLSIFVNFE (234 aa)). The alpha C-terminal domain (alpha-CTD) stretch occupies residues 250 to 338 (FNPLLLKKVD…DLAKRFEDQF (89 aa)).

This sequence belongs to the RNA polymerase alpha chain family. As to quaternary structure, homodimer. The RNAP catalytic core consists of 2 alpha, 1 beta, 1 beta' and 1 omega subunit. When a sigma factor is associated with the core the holoenzyme is formed, which can initiate transcription.

It catalyses the reaction RNA(n) + a ribonucleoside 5'-triphosphate = RNA(n+1) + diphosphate. Functionally, DNA-dependent RNA polymerase catalyzes the transcription of DNA into RNA using the four ribonucleoside triphosphates as substrates. In Cereibacter sphaeroides (strain ATCC 17029 / ATH 2.4.9) (Rhodobacter sphaeroides), this protein is DNA-directed RNA polymerase subunit alpha.